We begin with the raw amino-acid sequence, 930 residues long: Protein translocase subunit SecA (930 aa).

ATP is bound by residues Q87, 105-109, and D515; that span reads GEGKT. Positions 914, 916, 925, and 926 each coordinate Zn(2+).

It belongs to the SecA family. Monomer and homodimer. Part of the essential Sec protein translocation apparatus which comprises SecA, SecYEG and auxiliary proteins SecDF-YajC and YidC. The cofactor is Zn(2+).

It localises to the cell inner membrane. The protein resides in the cytoplasm. The catalysed reaction is ATP + H2O + cellular proteinSide 1 = ADP + phosphate + cellular proteinSide 2.. Part of the Sec protein translocase complex. Interacts with the SecYEG preprotein conducting channel. Has a central role in coupling the hydrolysis of ATP to the transfer of proteins into and across the cell membrane, serving both as a receptor for the preprotein-SecB complex and as an ATP-driven molecular motor driving the stepwise translocation of polypeptide chains across the membrane. This chain is Protein translocase subunit SecA, found in Burkholderia thailandensis (strain ATCC 700388 / DSM 13276 / CCUG 48851 / CIP 106301 / E264).